A 403-amino-acid polypeptide reads, in one-letter code: S-adenosylmethionine synthase (403 aa).

His-14 lines the ATP pocket. Asp-16 serves as a coordination point for Mg(2+). Glu-42 lines the K(+) pocket. Residues Glu-55 and Gln-99 each contribute to the L-methionine site. Positions 99–109 (QSPEIAEGVDH) are flexible loop. Residues 180–182 (DAK), 250–251 (RF), Asp-259, 265–266 (RK), Ala-282, and Lys-286 each bind ATP. Residue Asp-259 participates in L-methionine binding. Residue Lys-290 participates in L-methionine binding.

The protein belongs to the AdoMet synthase family. Homotetramer; dimer of dimers. Mg(2+) is required as a cofactor. K(+) serves as cofactor.

Its subcellular location is the cytoplasm. It carries out the reaction L-methionine + ATP + H2O = S-adenosyl-L-methionine + phosphate + diphosphate. It functions in the pathway amino-acid biosynthesis; S-adenosyl-L-methionine biosynthesis; S-adenosyl-L-methionine from L-methionine: step 1/1. Its function is as follows. Catalyzes the formation of S-adenosylmethionine (AdoMet) from methionine and ATP. The overall synthetic reaction is composed of two sequential steps, AdoMet formation and the subsequent tripolyphosphate hydrolysis which occurs prior to release of AdoMet from the enzyme. The polypeptide is S-adenosylmethionine synthase (Deinococcus deserti (strain DSM 17065 / CIP 109153 / LMG 22923 / VCD115)).